The primary structure comprises 776 residues: Acetone carboxylase alpha subunit (776 aa).

As to quaternary structure, heterohexamer of two alpha, two beta and two gamma subunits. It depends on Fe cation as a cofactor. Requires Mg(2+) as cofactor. Zn(2+) serves as cofactor. Post-translationally, the N-terminus is blocked.

It catalyses the reaction acetone + hydrogencarbonate + 2 ATP + 3 H2O = acetoacetate + 2 AMP + 4 phosphate + 4 H(+). Functionally, catalyzes the carboxylation of acetone to form acetoacetate. Has a reduced activity on butanone, and no activity on 2-pentatone, 3-pentatone, 2-hexanone, chloroacetone, pyruvate, phosphoenolpyruvate, acetaldehyde, propionaldehyde and propylene oxide. The sequence is that of Acetone carboxylase alpha subunit from Xanthobacter autotrophicus (strain ATCC BAA-1158 / Py2).